The following is a 263-amino-acid chain: Hydroxyethylthiazole kinase (263 aa).

Residue methionine 41 participates in substrate binding. Residues arginine 117 and serine 163 each contribute to the ATP site. Alanine 190 is a binding site for substrate.

The protein belongs to the Thz kinase family. Mg(2+) serves as cofactor.

It catalyses the reaction 5-(2-hydroxyethyl)-4-methylthiazole + ATP = 4-methyl-5-(2-phosphooxyethyl)-thiazole + ADP + H(+). It functions in the pathway cofactor biosynthesis; thiamine diphosphate biosynthesis; 4-methyl-5-(2-phosphoethyl)-thiazole from 5-(2-hydroxyethyl)-4-methylthiazole: step 1/1. Catalyzes the phosphorylation of the hydroxyl group of 4-methyl-5-beta-hydroxyethylthiazole (THZ). This Haemophilus influenzae (strain PittEE) protein is Hydroxyethylthiazole kinase.